Here is a 432-residue protein sequence, read N- to C-terminus: 3-phosphoshikimate 1-carboxyvinyltransferase (432 aa).

Residues lysine 22, serine 23, and arginine 27 each contribute to the 3-phosphoshikimate site. Lysine 22 is a phosphoenolpyruvate binding site. Residues glycine 96 and arginine 127 each coordinate phosphoenolpyruvate. 3-phosphoshikimate contacts are provided by serine 173, serine 174, glutamine 175, serine 201, aspartate 316, asparagine 339, and lysine 343. Glutamine 175 serves as a coordination point for phosphoenolpyruvate. Aspartate 316 functions as the Proton acceptor in the catalytic mechanism. Phosphoenolpyruvate contacts are provided by arginine 347, arginine 391, and lysine 416.

The protein belongs to the EPSP synthase family. In terms of assembly, monomer.

Its subcellular location is the cytoplasm. It catalyses the reaction 3-phosphoshikimate + phosphoenolpyruvate = 5-O-(1-carboxyvinyl)-3-phosphoshikimate + phosphate. It participates in metabolic intermediate biosynthesis; chorismate biosynthesis; chorismate from D-erythrose 4-phosphate and phosphoenolpyruvate: step 6/7. In terms of biological role, catalyzes the transfer of the enolpyruvyl moiety of phosphoenolpyruvate (PEP) to the 5-hydroxyl of shikimate-3-phosphate (S3P) to produce enolpyruvyl shikimate-3-phosphate and inorganic phosphate. In Histophilus somni (Haemophilus somnus), this protein is 3-phosphoshikimate 1-carboxyvinyltransferase.